The chain runs to 514 residues: MDPLHTIEKVPARRNIHDRGHQGHRMGDGTPGRPKISVQQMTRFSLIIFFLSAPFVVNASTSNVFLQWAHSYADGLQQGDPCWVCGSLPVTNTMELPWWVSPLQGKDWVFFQSFIGDLKQWTGAQMTGVTRKNISEWPINKTLNEPGHDKPFSVNETRDKVIAFAIPLLDTKVFVQTSRPQNTQYRNGFLQIWDGFIWLTATKGHLSQIAPLCWEQRNHSLDNWPNTTRVMGWIPPGQCRHTILLQQRDLFATDWSQQPGLNWYAPNGTQWLCSPNLWPWLPSGWLGCCTLGIPWAQGRWVKTMEVYPYLPHVVNQGTRAIVHRNDHLPTIFMPSVGLGTVIQHIEALANFTQRALNDSLQSISLMNAEVYYMHEDILQNRMALDILTAAEGGTCALIKTECCVYIPNNSRNISLALEDTCRQIQVISSSALSLHDWIASQFSGRPSWWQKILIVLATLWSVGIALCCGLYFCRMFSQHIPQTHSIIFQQELPLSPPSQEHYQSQRDIFHSNAP.

N-linked (GlcNAc...) asparagine glycosylation occurs at Asn-58. A surface protein region spans residues 60 to 316 (STSNVFLQWA…YPYLPHVVNQ (257 aa)). The short motif at 82–85 (CWVC) is the CXXC element. Asn-133, Asn-140, Asn-155, Asn-218, Asn-226, and Asn-267 each carry an N-linked (GlcNAc...) asparagine glycan. A transmembrane protein region spans residues 317 to 514 (GTRAIVHRND…QRDIFHSNAP (198 aa)). The tract at residues 328-348 (LPTIFMPSVGLGTVIQHIEAL) is fusion peptide. 2 N-linked (GlcNAc...) asparagine glycosylation sites follow: Asn-350 and Asn-357. Positions 378–394 (LQNRMALDILTAAEGGT) match the CKS-17 motif. A disulfide bridge connects residues Cys-395 and Cys-402. The CX6CC signature appears at 395 to 403 (CALIKTECC). 2 N-linked (GlcNAc...) asparagine glycosylation sites follow: Asn-408 and Asn-412. The helical transmembrane segment at 452-472 (ILIVLATLWSVGIALCCGLYF) threads the bilayer.

The protein belongs to the gamma type-C retroviral envelope protein family. HERV class-I R(b) env subfamily. Post-translationally, the CXXC motif is highly conserved across a broad range of retroviral envelope proteins. It is thought to participate in the formation of a labile disulfide bond possibly with the CX6CC motif present in the transmembrane domain. In terms of tissue distribution, low expression in placenta and testis.

The protein localises to the cell membrane. In terms of biological role, retroviral envelope proteins mediate receptor recognition and membrane fusion during early infection. Endogenous envelope proteins may have kept, lost or modified their original function during evolution. This endogenous envelope protein has lost its original fusogenic properties. The sequence is that of Endogenous retrovirus group PABLB member 1 Env polyprotein (ERVPABLB-1) from Homo sapiens (Human).